The sequence spans 129 residues: Small ribosomal subunit protein uS11 (129 aa).

It belongs to the universal ribosomal protein uS11 family. As to quaternary structure, part of the 30S ribosomal subunit. Interacts with proteins S7 and S18. Binds to IF-3.

Functionally, located on the platform of the 30S subunit, it bridges several disparate RNA helices of the 16S rRNA. Forms part of the Shine-Dalgarno cleft in the 70S ribosome. The sequence is that of Small ribosomal subunit protein uS11 from Rhodopseudomonas palustris (strain BisB18).